A 171-amino-acid chain; its full sequence is MTNFTFDGAHSSLEFQIKHLMVSKVKGSFDQFDVAVEGDINDFSTLKATATIIPSSINTKNEARDNHLKSGDFFGTDEFDKITFVTKSITESKVVGDLTIKGITNEETFDVEFNGVSKNPMDGSQVTGIIVTGIINREKYGINFNQTLETGGVMLGKDVKFEASAEFSISE.

Belongs to the UPF0312 family.

This chain is UPF0312 protein SAR2769, found in Staphylococcus aureus (strain MRSA252).